The chain runs to 189 residues: Peptidyl-tRNA hydrolase (189 aa).

A tRNA-binding site is contributed by Y16. Residue H21 is the Proton acceptor of the active site. Positions 67, 69, and 115 each coordinate tRNA.

This sequence belongs to the PTH family. As to quaternary structure, monomer.

It is found in the cytoplasm. The enzyme catalyses an N-acyl-L-alpha-aminoacyl-tRNA + H2O = an N-acyl-L-amino acid + a tRNA + H(+). In terms of biological role, hydrolyzes ribosome-free peptidyl-tRNAs (with 1 or more amino acids incorporated), which drop off the ribosome during protein synthesis, or as a result of ribosome stalling. Functionally, catalyzes the release of premature peptidyl moieties from peptidyl-tRNA molecules trapped in stalled 50S ribosomal subunits, and thus maintains levels of free tRNAs and 50S ribosomes. The sequence is that of Peptidyl-tRNA hydrolase from Legionella pneumophila (strain Corby).